The primary structure comprises 378 residues: 23S rRNA (uracil(747)-C(5))-methyltransferase RlmC (378 aa).

4 residues coordinate [4Fe-4S] cluster: cysteine 3, cysteine 11, cysteine 14, and cysteine 87. S-adenosyl-L-methionine-binding residues include glutamine 212, phenylalanine 241, glutamate 262, and asparagine 309. Residue cysteine 336 is the Nucleophile of the active site.

This sequence belongs to the class I-like SAM-binding methyltransferase superfamily. RNA M5U methyltransferase family. RlmC subfamily.

The enzyme catalyses uridine(747) in 23S rRNA + S-adenosyl-L-methionine = 5-methyluridine(747) in 23S rRNA + S-adenosyl-L-homocysteine + H(+). Its function is as follows. Catalyzes the formation of 5-methyl-uridine at position 747 (m5U747) in 23S rRNA. This Shewanella pealeana (strain ATCC 700345 / ANG-SQ1) protein is 23S rRNA (uracil(747)-C(5))-methyltransferase RlmC.